The following is a 511-amino-acid chain: Phosphoenolpyruvate carboxylase (511 aa).

The protein belongs to the PEPCase type 2 family. Homotetramer. Requires Mg(2+) as cofactor.

The enzyme catalyses oxaloacetate + phosphate = phosphoenolpyruvate + hydrogencarbonate. With respect to regulation, allosterically inhibited by L-aspartate and L-malate. PEPC activity is not affected by allosteric activators of E.coli PEPC such as glucose 6-phosphate, fructose 1,6-bisphosphate, and acetyl coenzyme A. Catalyzes the irreversible beta-carboxylation of phosphoenolpyruvate (PEP) to form oxaloacetate (OAA), a four-carbon dicarboxylic acid source for the tricarboxylic acid cycle. The chain is Phosphoenolpyruvate carboxylase from Saccharolobus solfataricus (strain ATCC 35092 / DSM 1617 / JCM 11322 / P2) (Sulfolobus solfataricus).